The primary structure comprises 518 residues: Glutamate--cysteine ligase (518 aa).

Belongs to the glutamate--cysteine ligase type 1 family. Type 1 subfamily.

It carries out the reaction L-cysteine + L-glutamate + ATP = gamma-L-glutamyl-L-cysteine + ADP + phosphate + H(+). It functions in the pathway sulfur metabolism; glutathione biosynthesis; glutathione from L-cysteine and L-glutamate: step 1/2. This is Glutamate--cysteine ligase from Escherichia coli O157:H7.